The sequence spans 646 residues: MADAVAEAVAKLVLDDETGEMVTKNELKKRIQKRARKAAAAANRSNAQQEKGNKPAANKPAAKPEERVIDPDAMFKQGFLGDVFKLRPEESVVTRFPPEPNGYLHLGHAKAIAVNFGFAKYHGGRTQQQLDGQINYIPTDVADSRFDDTNPDAEKGEYFVAIEDTIRWLGFTPSEITYASDNYQRMYDLAEELIKMEKAYVCHCDDVETKKQRGGEDGLFPRYRCEHAKQDVETNLKKFRGMRDGEYAPRSAWLRMKQDIENNPNPQMWDLAAYRIPKDQEPHFRTGTKWRIYPTYDFAHCLCDSFEGITHSLCTTEFIMSRESYEWLNKLLVEFQPMQREYGRLNLSGTIMSKRGLRTLIENNVVRGWDDPRLYTIKGIRRRGIPPGALLSFIYELGVTTSITQVSIKRFEQSIRVYLEKTVPRLMLVLDPVPVVIEDGEEQDLDIPFSPKDPKLGSHTIRLTKTVYIDRSDFREVDSKDYFRLAPGKTVGLLNVPYPIKAVSFTKDETTGAIKEIKAVYDKEGKKPKTYIQWVPEGSLPAEVRIHEALFKSDSPGSAPGGLLSDVNPNSETIWPNALIETGFHEVKRRAPWPEAEGEKTGEFHPETVRFQAMRVAYFALDSDSTDEKIVLNRIVPLKEDSGKSS.

Positions 25-65 (NELKKRIQKRARKAAAAANRSNAQQEKGNKPAANKPAAKPE) are disordered. The segment covering 38–61 (AAAAANRSNAQQEKGNKPAANKPA) has biased composition (low complexity). The short motif at 98–108 (PEPNGYLHLGH) is the 'HIGH' region element. ATP-binding positions include 99-101 (EPN) and 105-111 (HLGHAKA). The L-glutamine site is built by D147 and Y296. ATP-binding positions include T315, 344 to 345 (RL), and 352 to 354 (MSK). Positions 351-355 (IMSKR) match the 'KMSKS' region motif.

This sequence belongs to the class-I aminoacyl-tRNA synthetase family.

It catalyses the reaction tRNA(Gln) + L-glutamine + ATP = L-glutaminyl-tRNA(Gln) + AMP + diphosphate. Glutamine--tRNA ligase; part of the gene cluster that mediates the biosynthesis of virensols and trichoxide, fungal natural products that contain or are derived from a salicylaldehyde core. VirJ does not seem to play any role in virensols and trichoxide biosynthesis. The chain is Glutamine--tRNA ligase protein virJ from Hypocrea virens (strain Gv29-8 / FGSC 10586) (Gliocladium virens).